The chain runs to 225 residues: Small ribosomal subunit protein uS3 (225 aa).

A KH type-2 domain is found at 38-106 (LRKFLQGKLQ…EVSLNIVEIR (69 aa)).

This sequence belongs to the universal ribosomal protein uS3 family. Part of the 30S ribosomal subunit. Forms a tight complex with proteins S10 and S14.

Binds the lower part of the 30S subunit head. Binds mRNA in the 70S ribosome, positioning it for translation. The protein is Small ribosomal subunit protein uS3 of Rhodospirillum centenum (strain ATCC 51521 / SW).